Reading from the N-terminus, the 161-residue chain is Nucleotide-binding protein Vapar_3769 (161 aa).

Belongs to the YajQ family.

In terms of biological role, nucleotide-binding protein. The chain is Nucleotide-binding protein Vapar_3769 from Variovorax paradoxus (strain S110).